The chain runs to 87 residues: Phosphoribosyl-ATP pyrophosphatase (87 aa).

It belongs to the PRA-PH family.

Its subcellular location is the cytoplasm. It carries out the reaction 1-(5-phospho-beta-D-ribosyl)-ATP + H2O = 1-(5-phospho-beta-D-ribosyl)-5'-AMP + diphosphate + H(+). The protein operates within amino-acid biosynthesis; L-histidine biosynthesis; L-histidine from 5-phospho-alpha-D-ribose 1-diphosphate: step 2/9. This chain is Phosphoribosyl-ATP pyrophosphatase, found in Nocardia farcinica (strain IFM 10152).